Reading from the N-terminus, the 339-residue chain is UPF0324 membrane protein SpyM3_0740 (339 aa).

9 helical membrane-spanning segments follow: residues 7-24 (KLPG…AWYL), 28-50 (FPII…FYHH), 57-79 (GISF…GLNL), 84-106 (AVGM…VAYG), 118-140 (ATLV…APVI), 150-172 (AISV…GQLL), 256-275 (FILF…SLGV), 290-307 (FIVM…LVKL), and 314-336 (AILL…QLSL).

This sequence belongs to the UPF0324 family.

The protein resides in the cell membrane. This is UPF0324 membrane protein SpyM3_0740 from Streptococcus pyogenes serotype M3 (strain ATCC BAA-595 / MGAS315).